The following is a 237-amino-acid chain: Chaplin-B (237 aa).

The first 26 residues, 1 to 26 (MRRVTRNGVLAVAASGALAVTMPAYA), serve as a signal peptide directing secretion. A Chaplin 1 domain is found at 42 to 82 (SPGLISGNTVQLPVDVPVDVCGNTVNVVGLLNPAAGNGCAD). 2 disordered regions span residues 81–127 (ADSG…LSGN) and 148–216 (GIGN…TLAG). A compositionally biased stretch (low complexity) spans 101 to 115 (GSATEATSGGAAAEG). The Chaplin 2 domain maps to 120 to 160 (SPGVLSGNGVQLPVHLPVNVSGNSVNVVGIGNPAVGNESTN). Residues 169–178 (VRPPAEPEPS) show a composition bias toward pro residues. Positions 202-206 (LAHTG) match the LPXTG sorting signal motif. Threonine 205 is modified (pentaglycyl murein peptidoglycan amidated threonine). Positions 206 to 237 (GTDRTLPTLAGGAALVLGGTVLYRRFRPGSGD) are cleaved as a propeptide — removed by sortase.

It belongs to the chaplin family. Long chaplin subfamily.

The protein localises to the secreted. It localises to the cell wall. Functionally, one of 8 partially redundant surface-active proteins required for efficient formation of aerial mycelium; the short chaplins assemble into a hydrophobic, amyloidal fibrillar surface layer that envelopes and protects aerial hyphae and spores, presumably anchored to the long chaplins. Chaplins have an overlapping function with the surface-active SapB peptide; chaplins are essential on minimal medium while on rich medium both chaplins and SapB are required for efficient aerial hyphae formation. The long chaplins (ChpA, ChpB, ChpC) are not absolutely necessary for short chaplin localization or rodlet formation, but probably play a role in initiating aerial hyphae development. Chaplins are also involved in cell attachment to a hydrophobic surface. In Streptomyces coelicolor (strain ATCC BAA-471 / A3(2) / M145), this protein is Chaplin-B.